Reading from the N-terminus, the 162-residue chain is Phosphopantetheine adenylyltransferase (162 aa).

Thr9 serves as a coordination point for substrate. Residues 9–10 (TF) and His17 each bind ATP. Substrate is bound by residues Lys41, Leu76, and Arg90. ATP contacts are provided by residues 91-93 (GLR), Glu101, and 126-132 (HQAIASR).

This sequence belongs to the bacterial CoaD family. As to quaternary structure, homohexamer. Mg(2+) is required as a cofactor.

The protein resides in the cytoplasm. It carries out the reaction (R)-4'-phosphopantetheine + ATP + H(+) = 3'-dephospho-CoA + diphosphate. The protein operates within cofactor biosynthesis; coenzyme A biosynthesis; CoA from (R)-pantothenate: step 4/5. In terms of biological role, reversibly transfers an adenylyl group from ATP to 4'-phosphopantetheine, yielding dephospho-CoA (dPCoA) and pyrophosphate. The protein is Phosphopantetheine adenylyltransferase of Caulobacter sp. (strain K31).